A 61-amino-acid chain; its full sequence is Potassium channel toxin alpha-KTx 6.8 (61 aa).

Residues 1–23 form the signal peptide; that stretch reads MNAKFILLLLVVTTTILLPDTQG. 4 cysteine pairs are disulfide-bonded: Cys-29-Cys-50, Cys-35-Cys-55, Cys-39-Cys-57, and Cys-45-Cys-60. Cys-60 is subject to Cysteine amide.

This sequence belongs to the short scorpion toxin superfamily. Potassium channel inhibitor family. Alpha-KTx 06 subfamily. In terms of tissue distribution, expressed by the venom gland.

The protein resides in the secreted. Blocker of voltage-gated potassium channels. This chain is Potassium channel toxin alpha-KTx 6.8, found in Opistophthalmus carinatus (African yellow leg scorpion).